Consider the following 314-residue polypeptide: Probable tRNA pseudouridine synthase B (314 aa).

Positions 1-10 are enriched in basic residues; it reads MATRGRHRSR. The tract at residues 1–30 is disordered; that stretch reads MATRGRHRSRTSGTSSEPMTLRAPPDERDL. Asp72 (nucleophile) is an active-site residue. A PUA domain is found at 237–314; sequence LPRVTIAPSA…LVVELDRMLV (78 aa).

This sequence belongs to the pseudouridine synthase TruB family. Type 2 subfamily.

It carries out the reaction uridine(55) in tRNA = pseudouridine(55) in tRNA. In terms of biological role, could be responsible for synthesis of pseudouridine from uracil-55 in the psi GC loop of transfer RNAs. This is Probable tRNA pseudouridine synthase B from Haloarcula marismortui (strain ATCC 43049 / DSM 3752 / JCM 8966 / VKM B-1809) (Halobacterium marismortui).